The sequence spans 99 residues: MKYLLIKNKKLYKLFFKFELKRLQYKSVMLNTRLPNYIRQKAFMYINKLDKNTSYVAIKQRCFLSNNGRSVLNHFKLSRIKLRLLISNNYVNGVKKFNK.

The protein belongs to the universal ribosomal protein uS14 family.

The protein resides in the mitochondrion. This is Small ribosomal subunit protein uS14m (RPS14) from Acanthamoeba castellanii (Amoeba).